A 392-amino-acid chain; its full sequence is O-phospho-L-seryl-tRNA:Cys-tRNA synthase 2 (392 aa).

Residues 85–86 (AR), Asn-190, and 213–215 (SGH) each bind pyridoxal 5'-phosphate. An N6-(pyridoxal phosphate)lysine modification is found at Lys-216.

This sequence belongs to the SepCysS family. As to quaternary structure, homodimer. Interacts with SepRS. The cofactor is pyridoxal 5'-phosphate.

The catalysed reaction is O-phospho-L-seryl-tRNA(Cys) + hydrogen sulfide + H(+) = L-cysteinyl-tRNA(Cys) + phosphate. In terms of biological role, converts O-phospho-L-seryl-tRNA(Cys) (Sep-tRNA(Cys)) to L-cysteinyl-tRNA(Cys) (Cys-tRNA(Cys)). This chain is O-phospho-L-seryl-tRNA:Cys-tRNA synthase 2, found in Methanocorpusculum labreanum (strain ATCC 43576 / DSM 4855 / Z).